We begin with the raw amino-acid sequence, 253 residues long: Ribosomal RNA small subunit methyltransferase J (253 aa).

S-adenosyl-L-methionine contacts are provided by residues Arg-98–Asp-99, Glu-114–Arg-115, Ser-150–Ser-151, and Asp-172.

Belongs to the methyltransferase superfamily. RsmJ family.

It localises to the cytoplasm. It carries out the reaction guanosine(1516) in 16S rRNA + S-adenosyl-L-methionine = N(2)-methylguanosine(1516) in 16S rRNA + S-adenosyl-L-homocysteine + H(+). Functionally, specifically methylates the guanosine in position 1516 of 16S rRNA. The polypeptide is Ribosomal RNA small subunit methyltransferase J (Shewanella pealeana (strain ATCC 700345 / ANG-SQ1)).